The sequence spans 88 residues: MLAFCYSLPNAGDVIKGRVYEKDYALYIYLFDYPHSEAILAESVKMHMDRYVEYRDKLVGKTVKVKVIRVDYTKGYIDVNYKRMCRHQ.

Residues Leu8–Lys82 form the S1 motif domain. Binding to host EIF2AK2/PKR regions lie at residues Ser43–Glu53 and Lys74–Val79.

It belongs to the orthopoxvirus OPG041 family. As to quaternary structure, interacts with host EIF2AK2/PKR kinase.

Its function is as follows. Viral mimic of eIF-2-alpha that acts as a pseudosubstrate for EIF2AK2/PKR kinase. Inhibits therefore eIF-2-alpha phosphorylation by host EIF2AK2/PKR kinase and prevents protein synthesis shutoff. Determinant of host species specificity. The chain is Protein K3 (OPG041) from Homo sapiens (Human).